An 881-amino-acid chain; its full sequence is Fanconi anemia core complex-associated protein 100 (881 aa).

The disordered stretch occupies residues 94-119 (GRSRSTSQDDRDSEDGDQPSPVIPVD). S667 carries the phosphoserine modification.

Belongs to the multisubunit FA complex composed of FANCA, FANCB, FANCC, FANCE, FANCF, FANCG, FANCL/PHF9, FANCM, FAAP24 and FAAP100. Forms a subcomplex with FANCB and FANCL.

The protein localises to the nucleus. Its function is as follows. Plays a role in Fanconi anemia-associated DNA damage response network. Regulates FANCD2 monoubiquitination and the stability of the FA core complex. Induces chromosomal instability as well as hypersensitivity to DNA cross-linking agents, when repressed. The sequence is that of Fanconi anemia core complex-associated protein 100 from Homo sapiens (Human).